Consider the following 363-residue polypeptide: Flagellar P-ring protein 2 (363 aa).

The N-terminal stretch at 1–20 (MKLRTCCISLMLLLALPLQA) is a signal peptide.

This sequence belongs to the FlgI family. As to quaternary structure, the basal body constitutes a major portion of the flagellar organelle and consists of four rings (L,P,S, and M) mounted on a central rod.

The protein resides in the periplasm. Its subcellular location is the bacterial flagellum basal body. Assembles around the rod to form the L-ring and probably protects the motor/basal body from shearing forces during rotation. This chain is Flagellar P-ring protein 2, found in Photobacterium profundum (strain SS9).